The chain runs to 226 residues: Urease accessory protein UreF (226 aa).

The protein belongs to the UreF family. UreD, UreF and UreG form a complex that acts as a GTP-hydrolysis-dependent molecular chaperone, activating the urease apoprotein by helping to assemble the nickel containing metallocenter of UreC. The UreE protein probably delivers the nickel.

The protein resides in the cytoplasm. Its function is as follows. Required for maturation of urease via the functional incorporation of the urease nickel metallocenter. In Corynebacterium glutamicum (strain R), this protein is Urease accessory protein UreF.